We begin with the raw amino-acid sequence, 464 residues long: Ribosomal protein uS12 methylthiotransferase RimO (464 aa).

An MTTase N-terminal domain is found at 14–125 (PTVAFAHLGC…IVEVLQRVEA (112 aa)). [4Fe-4S] cluster-binding residues include cysteine 23, cysteine 59, cysteine 88, cysteine 163, cysteine 167, and cysteine 170. Residues 149–378 (TTDQAVAFLK…MALQQPISAE (230 aa)) form the Radical SAM core domain. The region spanning 381–452 (HSWVSRTVDV…VYDLSGRIVG (72 aa)) is the TRAM domain.

Belongs to the methylthiotransferase family. RimO subfamily. It depends on [4Fe-4S] cluster as a cofactor.

The protein resides in the cytoplasm. The enzyme catalyses L-aspartate(89)-[ribosomal protein uS12]-hydrogen + (sulfur carrier)-SH + AH2 + 2 S-adenosyl-L-methionine = 3-methylsulfanyl-L-aspartate(89)-[ribosomal protein uS12]-hydrogen + (sulfur carrier)-H + 5'-deoxyadenosine + L-methionine + A + S-adenosyl-L-homocysteine + 2 H(+). In terms of biological role, catalyzes the methylthiolation of an aspartic acid residue of ribosomal protein uS12. The chain is Ribosomal protein uS12 methylthiotransferase RimO from Parasynechococcus marenigrum (strain WH8102).